A 368-amino-acid polypeptide reads, in one-letter code: Serine/threonine-protein kinase CAK1 (368 aa).

Positions 1–368 constitute a Protein kinase domain; it reads MKLDSIDITH…QRILQELEKP (368 aa). Asp156 functions as the Proton acceptor in the catalytic mechanism.

The protein belongs to the protein kinase superfamily. CMGC Ser/Thr protein kinase family. CDC2/CDKX subfamily.

The enzyme catalyses L-seryl-[protein] + ATP = O-phospho-L-seryl-[protein] + ADP + H(+). It carries out the reaction L-threonyl-[protein] + ATP = O-phospho-L-threonyl-[protein] + ADP + H(+). In Saccharomyces cerevisiae (strain ATCC 204508 / S288c) (Baker's yeast), this protein is Serine/threonine-protein kinase CAK1 (CAK1).